Consider the following 351-residue polypeptide: Mitochondrial mRNA pseudouridine synthase RPUSD3 (351 aa).

Residues 1–25 (MRAVLAREMDGRRVLGRFWSGWRRG) constitute a mitochondrion transit peptide. Residues 33 to 58 (EDAGFGTEARHQRQPRGSCQRSGPLG) are disordered. S71 bears the Phosphoserine mark.

This sequence belongs to the pseudouridine synthase RluA family. Forms a regulatory protein-RNA complex, consisting of RCC1L, NGRN, RPUSD3, RPUSD4, TRUB2, FASTKD2 and 16S mt-rRNA.

It localises to the mitochondrion matrix. The catalysed reaction is a uridine in mRNA = a pseudouridine in mRNA. Its function is as follows. Catalyzes uridine to pseudouridine isomerization (pseudouridylation) of specific mitochondrial mRNAs (mt-mRNAs), a post-transcriptional modification necessary for their translation. Acts at position 390 in COXI mt-mRNA and at position 697-699 in mitochondrial COXIII mt-mRNA. As a component of a functional protein-RNA module, consisting of RCC1L, NGRN, RPUSD3, RPUSD4, TRUB2, FASTKD2 and 16S mitochondrial ribosomal RNA (16S mt-rRNA), controls 16S mt-rRNA abundance and may play a role in mitochondrial ribosome biogenesis. This chain is Mitochondrial mRNA pseudouridine synthase RPUSD3, found in Homo sapiens (Human).